The following is a 751-amino-acid chain: Catalase-peroxidase 2 (751 aa).

A signal peptide spans 1–27; the sequence is MFKKTVPLLSAVAIAISFSAGTGVANA. Residues 115-238 constitute a cross-link (tryptophyl-tyrosyl-methioninium (Trp-Tyr) (with M-264)); the sequence is WHGAGTYRVQ…LAAVQMGLIY (124 aa). The active-site Proton acceptor is the H116. Residues 238–264 constitute a cross-link (tryptophyl-tyrosyl-methioninium (Tyr-Met) (with W-115)); it reads YVNPEGPNGKPDPLLAAKDIRDTFGRM. H279 contributes to the heme b binding site.

Belongs to the peroxidase family. Peroxidase/catalase subfamily. In terms of assembly, homodimer or homotetramer. Heme b is required as a cofactor. In terms of processing, formation of the three residue Trp-Tyr-Met cross-link is important for the catalase, but not the peroxidase activity of the enzyme.

The catalysed reaction is H2O2 + AH2 = A + 2 H2O. The enzyme catalyses 2 H2O2 = O2 + 2 H2O. Functionally, bifunctional enzyme with both catalase and broad-spectrum peroxidase activity. In Idiomarina loihiensis (strain ATCC BAA-735 / DSM 15497 / L2-TR), this protein is Catalase-peroxidase 2.